The sequence spans 782 residues: Endonuclease MutS2 (782 aa).

336–343 (GPNTGGKT) is a binding site for ATP. Residues 707–782 (LDLRGYRYED…GFGVTVATLK (76 aa)) form the Smr domain.

The protein belongs to the DNA mismatch repair MutS family. MutS2 subfamily. Homodimer. Binds to stalled ribosomes, contacting rRNA.

Endonuclease that is involved in the suppression of homologous recombination and thus may have a key role in the control of bacterial genetic diversity. In terms of biological role, acts as a ribosome collision sensor, splitting the ribosome into its 2 subunits. Detects stalled/collided 70S ribosomes which it binds and splits by an ATP-hydrolysis driven conformational change. Acts upstream of the ribosome quality control system (RQC), a ribosome-associated complex that mediates the extraction of incompletely synthesized nascent chains from stalled ribosomes and their subsequent degradation. Probably generates substrates for RQC. The polypeptide is Endonuclease MutS2 (Staphylococcus aureus (strain Mu50 / ATCC 700699)).